The following is an 818-amino-acid chain: Exchange factor for Arf-6 (818 aa).

Disordered stretches follow at residues 92–123 (AQKL…ESSP), 137–168 (MEST…ENDD), 208–291 (NHHH…GVSN), and 326–383 (RTTP…VGGE). The segment covering 107–119 (IERRGSLARKTSE) has biased composition (basic and acidic residues). Residues 140–149 (TDVEESEEET) show a composition bias toward acidic residues. Positions 154 to 165 (TDEKENQKKPNE) are enriched in basic and acidic residues. 2 stretches are compositionally biased toward polar residues: residues 213–223 (YNSSPQISTLS) and 255–269 (MSNN…SPEN). A compositionally biased stretch (low complexity) spans 326 to 347 (RTTPNTAASNSSASASPSLHAT). The 177-residue stretch at 356 to 532 (GVSLRSAESS…KTLFQSIKDN (177 aa)) folds into the SEC7 domain. Over residues 361 to 380 (SAESSNLNQTAVPSTSTNSV) the composition is skewed to polar residues. The region spanning 569–681 (VEYYSGFLMR…WCEKINFVAA (113 aa)) is the PH domain. Residues 782–799 (TMNIMMTPTRRQQQNQKP) show a composition bias toward polar residues. Residues 782 to 818 (TMNIMMTPTRRQQQNQKPVVSEDRLSYTDAVNGAAAH) are disordered.

In terms of assembly, interacts (via short N-terminal region) with microtubule-associated proteins tac-1 and zyg-8.

The protein resides in the cytoplasm. The protein localises to the cell cortex. Its subcellular location is the cell membrane. Functionally, guanine nucleotide exchange factor for arf-6. Involved in response to injury in mechanosensory neurons. Inhibits axon regrowth via microtubule dynamics, possibly by inducing axonal microtubule catastrophes. Limits microtubule growth near the cellular cortex of early embryonic cells. This Caenorhabditis elegans protein is Exchange factor for Arf-6.